Reading from the N-terminus, the 525-residue chain is Light-independent protochlorophyllide reductase subunit B (525 aa).

Asp36 provides a ligand contact to [4Fe-4S] cluster. Catalysis depends on Asp290, which acts as the Proton donor. 425–426 (GL) lines the substrate pocket.

Belongs to the ChlB/BchB/BchZ family. In terms of assembly, protochlorophyllide reductase is composed of three subunits; ChlL, ChlN and ChlB. Forms a heterotetramer of two ChlB and two ChlN subunits. It depends on [4Fe-4S] cluster as a cofactor.

The catalysed reaction is chlorophyllide a + oxidized 2[4Fe-4S]-[ferredoxin] + 2 ADP + 2 phosphate = protochlorophyllide a + reduced 2[4Fe-4S]-[ferredoxin] + 2 ATP + 2 H2O. It functions in the pathway porphyrin-containing compound metabolism; chlorophyll biosynthesis (light-independent). Component of the dark-operative protochlorophyllide reductase (DPOR) that uses Mg-ATP and reduced ferredoxin to reduce ring D of protochlorophyllide (Pchlide) to form chlorophyllide a (Chlide). This reaction is light-independent. The NB-protein (ChlN-ChlB) is the catalytic component of the complex. The chain is Light-independent protochlorophyllide reductase subunit B from Prochlorococcus marinus (strain MIT 9312).